Consider the following 236-residue polypeptide: MAQAGRTGYDNREIVMKYIHYKLSQRGYEWDVGDVDAAPLGAAPTPGIFSFQPESNPTPAVHRDMAARTSPLRPIVATTGPTLSPVPPVVHLTLRRAGDDFSRRYRRDFAEMSSQLHLTPFTARGRFATVVEELFRDGVNWGRIVAFFEFGGVMCVESVNREMSPLVDNIALWMTEYLNRHLHTWIQDNGGWDAFVELYGPSVRPLFDFSWLSLKTLLSLALVGACITLGTYLGHK.

The BH4 signature appears at 10–30 (DNREIVMKYIHYKLSQRGYEW). Thr69 carries the post-translational modification Phosphothreonine; by MAPK8. Phosphoserine; by MAPK8 and PKC is present on Ser70. Ser84 is modified (phosphoserine; by MAPK8). The short motif at 90-104 (VHLTLRRAGDDFSRR) is the BH3 element. A BH1 motif is present at residues 133–152 (ELFRDGVNWGRIVAFFEFGG). The BH2 signature appears at 184–199 (TWIQDNGGWDAFVELY). A helical membrane pass occupies residues 209–230 (FSWLSLKTLLSLALVGACITLG).

The protein belongs to the Bcl-2 family. In terms of assembly, forms homodimers, and heterodimers with BAX, BAD, BAK and Bcl-X(L). Heterodimerization with BAX requires intact BH1 and BH2 motifs, and is necessary for anti-apoptotic activity. Component of the complex, at least composed of LRPPRC, BECN1 and BCL2; the interactions prevent BECN1 from forming an autophagy-inducing complex with PIK3C3. Interacts with EI24. Also interacts with APAF1, BBC3, BCL2L1, BNIPL, MRPL41 and TP53BP2. Binding to FKBP8 seems to target BCL2 to the mitochondria and probably interferes with the binding of BCL2 to its targets. Interacts with BAG1 in an ATP-dependent manner. Interacts with RAF1 (the 'Ser-338' and 'Ser-339' phosphorylated form). Interacts (via the BH4 domain) with EGLN3; the interaction prevents the formation of the BAX-BCL2 complex and inhibits the anti-apoptotic activity of BCL2. Interacts with G0S2; this interaction also prevents the formation of the anti-apoptotic BAX-BCL2 complex. Interacts with RTL10/BOP. Interacts with the SCF(FBXO10) complex. Interacts (via the loop between motifs BH4 and BH3) with NLRP1 (via LRR repeats), but not with NLRP2, NLRP3, NLRP4, PYCARD, nor MEFV. Interacts with GIMAP3/IAN4, GIMAP4/IAN1 and GIMAP5/IAN5. Interacts with BCAP31. Interacts with IRF3; the interaction is inhibited by Sendai virus infection. Interacts with BECN1; thereby inhibiting autophagy in non-starvation conditions. Interacts with AMBRA1; thereby inhibiting autophagy. In terms of processing, phosphorylation/dephosphorylation on Ser-70 regulates anti-apoptotic activity. Growth factor-stimulated phosphorylation on Ser-70 by PKC is required for the anti-apoptosis activity and occurs during the G2/M phase of the cell cycle. In the absence of growth factors, BCL2 appears to be phosphorylated by other protein kinases such as ERKs and stress-activated kinases. Phosphorylated by MAPK8/JNK1 at Thr-69, Ser-70 and Ser-84, which stimulates starvation-induced autophagy. Dephosphorylated by protein phosphatase 2A (PP2A). Proteolytically cleaved by caspases during apoptosis. The cleaved protein, lacking the BH4 motif, has pro-apoptotic activity, causes the release of cytochrome c into the cytosol promoting further caspase activity. Post-translationally, monoubiquitinated by PRKN, leading to an increase in its stability. Ubiquitinated by SCF(FBXO10), leading to its degradation by the proteasome.

The protein resides in the mitochondrion outer membrane. Its subcellular location is the nucleus membrane. It localises to the endoplasmic reticulum membrane. The protein localises to the cytoplasm. In terms of biological role, suppresses apoptosis in a variety of cell systems including factor-dependent lymphohematopoietic and neural cells. Regulates cell death by controlling the mitochondrial membrane permeability. Appears to function in a feedback loop system with caspases. Inhibits caspase activity either by preventing the release of cytochrome c from the mitochondria and/or by binding to the apoptosis-activating factor (APAF-1). Also acts as an inhibitor of autophagy: interacts with BECN1 and AMBRA1 during non-starvation conditions and inhibits their autophagy function. May attenuate inflammation by impairing NLRP1-inflammasome activation, hence CASP1 activation and IL1B release. The sequence is that of Apoptosis regulator Bcl-2 (BCL2) from Cricetulus griseus (Chinese hamster).